Here is a 493-residue protein sequence, read N- to C-terminus: (+)-menthofuran synthase (493 aa).

Position 1 (methionine 1) is a topological domain, cytoplasmic. The helical; Signal-anchor for type II membrane protein transmembrane segment at 2–19 (AALLVFFSVSLILLAVLF) threads the bilayer. The Lumenal segment spans residues 20–493 (HKRKSSLSSR…LLVLATPRQS (474 aa)). N-linked (GlcNAc...) asparagine glycosylation is present at asparagine 169. Cysteine 434 contacts heme.

It belongs to the cytochrome P450 family. Heme serves as cofactor.

Its subcellular location is the membrane. The enzyme catalyses (R)-pulegone + reduced [NADPH--hemoprotein reductase] + O2 = (R)-menthofuran + oxidized [NADPH--hemoprotein reductase] + 2 H2O + H(+). It functions in the pathway secondary metabolite biosynthesis; terpenoid biosynthesis. Monoterpene synthase that catalyzes the formation of (+)-menthofuran from (+)-pulegone. The protein is (+)-menthofuran synthase of Mentha piperita (Peppermint).